The following is a 131-amino-acid chain: Small ribosomal subunit protein uS8 (131 aa).

Belongs to the universal ribosomal protein uS8 family. As to quaternary structure, part of the 30S ribosomal subunit. Contacts proteins S5 and S12.

One of the primary rRNA binding proteins, it binds directly to 16S rRNA central domain where it helps coordinate assembly of the platform of the 30S subunit. This chain is Small ribosomal subunit protein uS8, found in Paracidovorax citrulli (strain AAC00-1) (Acidovorax citrulli).